A 551-amino-acid chain; its full sequence is CTP synthase (551 aa).

An amidoligase domain region spans residues 1–267 (MSGTKYIFVT…DALVLEKLGL (267 aa)). CTP is bound at residue serine 15. Position 15 (serine 15) interacts with UTP. 16 to 21 (SIGKGT) is an ATP binding site. Position 56 (tyrosine 56) interacts with L-glutamine. Residue aspartate 73 coordinates ATP. Mg(2+) contacts are provided by aspartate 73 and glutamate 141. CTP contacts are provided by residues 148 to 150 (DIE), 188 to 193 (KTKPTQ), and lysine 224. UTP is bound by residues 188-193 (KTKPTQ) and lysine 224. The Glutamine amidotransferase type-1 domain occupies 292-534 (RVAVIGKYIR…VGACLGAAEE (243 aa)). Residue glycine 355 coordinates L-glutamine. Residue cysteine 382 is the Nucleophile; for glutamine hydrolysis of the active site. L-glutamine is bound by residues 383–386 (LGMQ), glutamate 406, and arginine 462. Residues histidine 507 and glutamate 509 contribute to the active site.

It belongs to the CTP synthase family. In terms of assembly, homotetramer.

The catalysed reaction is UTP + L-glutamine + ATP + H2O = CTP + L-glutamate + ADP + phosphate + 2 H(+). It carries out the reaction L-glutamine + H2O = L-glutamate + NH4(+). It catalyses the reaction UTP + NH4(+) + ATP = CTP + ADP + phosphate + 2 H(+). It participates in pyrimidine metabolism; CTP biosynthesis via de novo pathway; CTP from UDP: step 2/2. Allosterically activated by GTP, when glutamine is the substrate; GTP has no effect on the reaction when ammonia is the substrate. The allosteric effector GTP functions by stabilizing the protein conformation that binds the tetrahedral intermediate(s) formed during glutamine hydrolysis. Inhibited by the product CTP, via allosteric rather than competitive inhibition. Catalyzes the ATP-dependent amination of UTP to CTP with either L-glutamine or ammonia as the source of nitrogen. Regulates intracellular CTP levels through interactions with the four ribonucleotide triphosphates. In Rubrobacter xylanophilus (strain DSM 9941 / JCM 11954 / NBRC 16129 / PRD-1), this protein is CTP synthase.